A 337-amino-acid polypeptide reads, in one-letter code: Neurogenic differentiation factor 6 (337 aa).

The segment at 43 to 82 is disordered; it reads LRGKSIKRAPGEETEKEEEEEDREEEDENGLPRRRGLRKK. The segment covering 54–71 has biased composition (acidic residues); sequence EETEKEEEEEDREEEDEN. The Nuclear localization signal motif lies at 80 to 86; it reads RKKKTTK. The region spanning 94-146 is the bHLH domain; it reads FRRQEANARERNRMHGLNDALDNLRKVVPCYSKTQKLSKIETLRLAKNYIWAL.

As to quaternary structure, efficient DNA binding requires dimerization with another bHLH protein.

Its subcellular location is the nucleus. Its function is as follows. Activates E box-dependent transcription in collaboration with TCF3/E47. May be a trans-acting factor involved in the development and maintenance of the mammalian nervous system. Transactivates the promoter of its own gene. The polypeptide is Neurogenic differentiation factor 6 (NEUROD6) (Bos taurus (Bovine)).